We begin with the raw amino-acid sequence, 133 residues long: Holo-[acyl-carrier-protein] synthase (133 aa).

Mg(2+) is bound by residues Asp-8 and Glu-56.

This sequence belongs to the P-Pant transferase superfamily. AcpS family. Mg(2+) is required as a cofactor.

It localises to the cytoplasm. The enzyme catalyses apo-[ACP] + CoA = holo-[ACP] + adenosine 3',5'-bisphosphate + H(+). Transfers the 4'-phosphopantetheine moiety from coenzyme A to a Ser of acyl-carrier-protein. This is Holo-[acyl-carrier-protein] synthase from Clostridium perfringens (strain 13 / Type A).